The sequence spans 389 residues: MASELFATYYPRVVEAAQQLAPWQIAAGVTAAVVIGGYIWIITELRSPRRTGTSLFKLSGGGIKKHDVAKFMDGYEKSYKTQEDGALTWHHISKEDSVKMVNTFYDLVTDAYEWAWDISFHFSCRPVWANFAQAQVLHECRIANLARIQPGMKVIDVGTGVGNPGRTIASLTGAHVTGVTINAYQIKRALHHTKKAGLLDMYKPVQADFTDMPFADESFDAAFAIEATCHAPKLEQVYAEVYRVLKPGAYFAVYEAVSKPNFDPKNKRHVEIINSLVYGNGIPDMRTWKEAEEAGKKVGFKLHFSYDAGEASSVLAPWWERPRNLVNTGVIAYTKFAIKVCDKIGILPRDYAKFAKCVGDCIPDAVESGELGIFTPMYVYVWQKPEKST.

Residues 25 to 45 form a helical membrane-spanning segment; it reads IAAGVTAAVVIGGYIWIITEL.

It belongs to the class I-like SAM-binding methyltransferase superfamily. Erg6/SMT family.

It localises to the microsome membrane. Functionally, unable to convert squalene, botryococcene, cycloartenol, zymosterol or lanosterol to mono-, di-, tri- or tetramethylated derivatives. The chain is Sterol methyltransferase-like 1 (SMT-1) from Botryococcus braunii (Green alga).